Consider the following 471-residue polypeptide: Desmin (471 aa).

The interval 2-109 (SQAYSSSQRV…QEFLTTRTNE (108 aa)) is head. Phosphoserine; by CDK1 is present on serine 7. The residue at position 12 (serine 12) is a Phosphoserine; by AURKB. Arginine 16 bears the Omega-N-methylarginine mark. A Phosphothreonine; by AURKB and ROCK1 modification is found at threonine 17. Serine 28 is modified (phosphoserine; by CDK1). The residue at position 31 (serine 31) is a Phosphoserine. Position 32 is a phosphoserine; by CDK1 (serine 32). Arginine 37 is subject to Asymmetric dimethylarginine; alternate. Position 37 is an omega-N-methylarginine; alternate (arginine 37). Serine 45 bears the Phosphoserine mark. At arginine 58 the chain carries ADP-ribosylarginine. Serine 60 is subject to Phosphoserine; by AURKB. Arginine 70 carries the post-translational modification Omega-N-methylarginine. Phosphothreonine; by ROCK1 is present on threonine 77. Serine 81 is modified (phosphoserine). The region spanning 109-417 (EKVELQELND…KLLEGEESRI (309 aa)) is the IF rod domain. Residues 110–142 (KVELQELNDRFANYIEKVRFLEQQNAALAAEVN) are coil 1A. The linker 1 stretch occupies residues 143–152 (RLKGREPTRV). A coil 1B region spans residues 153 to 253 (AEIYEEELRE…HEEEIRELQA (101 aa)). The linker 12 stretch occupies residues 254–269 (QLQEQQVQVEMDMSKP). Positions 269–416 (PDLTAALRDI…RKLLEGEESR (148 aa)) are interaction with NEB. A coil 2A region spans residues 270–288 (DLTAALRDIRAQYETIAAK). Residues 289 to 296 (NISEAEEW) are linker 2. Residues serine 291, serine 359, serine 362, and serine 425 each carry the phosphoserine modification. The interval 297–413 (YKSKVSDLTQ…ATYRKLLEGE (117 aa)) is coil 2B. Positions 414-471 (ESRINLPIQTFSALNFRETSPEQRGSEVHTKKTVMIKTIETRDGEVVSEATQQQHEVL) are tail. Positions 439–454 (SEVHTKKTVMIKTIET) are interaction with CRYAB.

It belongs to the intermediate filament family. In terms of assembly, homomer. Interacts with DST. Interacts with MTM1. Interacts with EPPK1; interaction is dependent of higher-order structure of intermediate filament. Interacts with CRYAB. Interacts with NEB (via nebulin repeats 160-164). Interacts (via rod region) with NEBL (via nebulin repeats 1-5). Interacts with ASB2; the interaction targets DES for proteasomal degradation. Interacts with PKP1. Interacts with FLII. Post-translationally, ADP-ribosylation prevents ability to form intermediate filaments. Phosphorylation at Ser-7, Ser-28 and Ser-32 by CDK1 and phosphorylation at Ser-60 by AURKB contribute to efficient separation of desmin intermediate filaments during mitosis. In terms of processing, ubiquitination by a SCF-like complex containing ASB2 leads to proteasomal degradation.

The protein resides in the cytoplasm. It localises to the myofibril. It is found in the sarcomere. The protein localises to the z line. Its subcellular location is the cell membrane. The protein resides in the sarcolemma. It localises to the nucleus. It is found in the cell tip. The protein localises to the nucleus envelope. Functionally, muscle-specific type III intermediate filament essential for proper muscular structure and function. Plays a crucial role in maintaining the structure of sarcomeres, inter-connecting the Z-disks and forming the myofibrils, linking them not only to the sarcolemmal cytoskeleton, but also to the nucleus and mitochondria, thus providing strength for the muscle fiber during activity. In adult striated muscle they form a fibrous network connecting myofibrils to each other and to the plasma membrane from the periphery of the Z-line structures. May act as a sarcomeric microtubule-anchoring protein: specifically associates with detyrosinated tubulin-alpha chains, leading to buckled microtubules and mechanical resistance to contraction. Required for nuclear membrane integrity, via anchoring at the cell tip and nuclear envelope, resulting in maintenance of microtubule-derived intracellular mechanical forces. Contributes to the transcriptional regulation of the NKX2-5 gene in cardiac progenitor cells during a short period of cardiomyogenesis and in cardiac side population stem cells in the adult. Plays a role in maintaining an optimal conformation of nebulette (NEB) on heart muscle sarcomeres to bind and recruit cardiac alpha-actin. This Sus scrofa (Pig) protein is Desmin (DES).